Reading from the N-terminus, the 489-residue chain is Mitochondrial-processing peptidase subunit beta (489 aa).

The transit peptide at 1 to 45 (MAAAAVSRTLLPVAGRRLWGFTRRLPLRAAAAQPLYFGGDRLRST) directs the protein to the mitochondrion. Residue H101 participates in Zn(2+) binding. Residue E104 is the Proton acceptor of the active site. Zn(2+) contacts are provided by H105 and E181.

Belongs to the peptidase M16 family. As to quaternary structure, heterodimer of PMPCA (alpha) and PMPCB (beta) subunits, forming the mitochondrial processing protease (MPP) in which PMPCA is involved in substrate recognition and binding and PMPCB is the catalytic subunit. Zn(2+) serves as cofactor.

It is found in the mitochondrion matrix. The catalysed reaction is Release of N-terminal transit peptides from precursor proteins imported into the mitochondrion, typically with Arg in position P2.. With respect to regulation, binding to PMPCA is required for catalytic activity. Functionally, catalytic subunit of the essential mitochondrial processing protease (MPP), which cleaves the mitochondrial sequence off newly imported precursors proteins. Preferentially, cleaves after an arginine at position P2. Required for PINK1 turnover by coupling PINK1 mitochondrial import and cleavage, which results in subsequent PINK1 proteolysis. This Rattus norvegicus (Rat) protein is Mitochondrial-processing peptidase subunit beta (Pmpcb).